Here is a 295-residue protein sequence, read N- to C-terminus: Sulfotransferase 1E1 (295 aa).

48–53 (KSGTTW) is a binding site for 3'-phosphoadenylyl sulfate. 106-108 (KTH) provides a ligand contact to substrate. His108 serves as the catalytic Proton acceptor. 3'-phosphoadenylyl sulfate is bound by residues Arg130 and Ser138. The residue at position 156 (Ser156) is a Phosphoserine. 3'-phosphoadenylyl sulfate contacts are provided by residues Tyr193, 227-232 (TSFQEM), and 257-259 (RKG).

The protein belongs to the sulfotransferase 1 family. As to quaternary structure, homodimer. In terms of tissue distribution, testis and at very low level in the placenta.

Its subcellular location is the cytoplasm. It localises to the cytosol. The catalysed reaction is estrone + 3'-phosphoadenylyl sulfate = estrone 3-sulfate + adenosine 3',5'-bisphosphate + H(+). It carries out the reaction 17beta-estradiol + 3'-phosphoadenylyl sulfate = 17beta-estradiol 3-sulfate + adenosine 3',5'-bisphosphate + H(+). The enzyme catalyses (24S)-hydroxycholesterol + 3'-phosphoadenylyl sulfate = (24S)-hydroxycholesterol 3-sulfate + adenosine 3',5'-bisphosphate + H(+). It catalyses the reaction 3beta-hydroxyandrost-5-en-17-one + 3'-phosphoadenylyl sulfate = dehydroepiandrosterone 3-sulfate + adenosine 3',5'-bisphosphate + H(+). The catalysed reaction is 4-ethylphenol + 3'-phosphoadenylyl sulfate = 4-ethylphenyl sulfate + adenosine 3',5'-bisphosphate + H(+). With respect to regulation, inhibited by estradiol. Its function is as follows. Sulfotransferase that utilizes 3'-phospho-5'-adenylyl sulfate (PAPS) as sulfonate donor to catalyze the sulfate conjugation of estradiol and estrone. Is a key enzyme in estrogen homeostasis, the sulfation of estrogens leads to their inactivation. Also sulfates dehydroepiandrosterone, pregnenolone, (24S)-hydroxycholesterol and xenobiotic compounds like ethinylestradiol, equalenin, diethyl stilbesterol and 1-naphthol at significantly lower efficiency. Does not sulfonate cortisol, testosterone and dopamine. May play a role in gut microbiota-host metabolic interaction. O-sulfonates 4-ethylphenol (4-EP), a dietary tyrosine-derived metabolite produced by gut bacteria. The product 4-EPS crosses the blood-brain barrier and may negatively regulate oligodendrocyte maturation and myelination, affecting the functional connectivity of different brain regions associated with the limbic system. The chain is Sulfotransferase 1E1 (Sult1e1) from Mus musculus (Mouse).